The chain runs to 177 residues: Large ribosomal subunit protein uL6 (177 aa).

Belongs to the universal ribosomal protein uL6 family. As to quaternary structure, part of the 50S ribosomal subunit.

Its function is as follows. This protein binds to the 23S rRNA, and is important in its secondary structure. It is located near the subunit interface in the base of the L7/L12 stalk, and near the tRNA binding site of the peptidyltransferase center. The protein is Large ribosomal subunit protein uL6 of Pectobacterium atrosepticum (strain SCRI 1043 / ATCC BAA-672) (Erwinia carotovora subsp. atroseptica).